A 409-amino-acid chain; its full sequence is Elongation factor Tu (409 aa).

A tr-type G domain is found at 10–214 (KPHVNIGTIG…AVDDNIPEPE (205 aa)). Positions 19–26 (GHVDHGKT) are G1. 19-26 (GHVDHGKT) contributes to the GTP binding site. T26 lines the Mg(2+) pocket. The interval 60-64 (GITIN) is G2. Positions 81 to 84 (DCPG) are G3. Residues 81–85 (DCPGH) and 136–139 (NKKD) each bind GTP. The segment at 136–139 (NKKD) is G4. The G5 stretch occupies residues 174–176 (SAL).

The protein belongs to the TRAFAC class translation factor GTPase superfamily. Classic translation factor GTPase family. EF-Tu/EF-1A subfamily. In terms of assembly, monomer.

Its subcellular location is the cytoplasm. The catalysed reaction is GTP + H2O = GDP + phosphate + H(+). Its function is as follows. GTP hydrolase that promotes the GTP-dependent binding of aminoacyl-tRNA to the A-site of ribosomes during protein biosynthesis. This chain is Elongation factor Tu, found in Crocosphaera subtropica (strain ATCC 51142 / BH68) (Cyanothece sp. (strain ATCC 51142)).